Here is a 217-residue protein sequence, read N- to C-terminus: Probable transaldolase (217 aa).

Lysine 83 functions as the Schiff-base intermediate with substrate in the catalytic mechanism.

This sequence belongs to the transaldolase family. Type 3B subfamily.

Its subcellular location is the cytoplasm. The enzyme catalyses D-sedoheptulose 7-phosphate + D-glyceraldehyde 3-phosphate = D-erythrose 4-phosphate + beta-D-fructose 6-phosphate. Its pathway is carbohydrate degradation; pentose phosphate pathway; D-glyceraldehyde 3-phosphate and beta-D-fructose 6-phosphate from D-ribose 5-phosphate and D-xylulose 5-phosphate (non-oxidative stage): step 2/3. Functionally, transaldolase is important for the balance of metabolites in the pentose-phosphate pathway. The sequence is that of Probable transaldolase from Bartonella quintana (strain Toulouse) (Rochalimaea quintana).